Here is a 724-residue protein sequence, read N- to C-terminus: Probable metal-nicotianamine transporter YSL8 (724 aa).

Residues 1 to 58 form a disordered region; it reads MRKGGLTPDRDRQIEEHELQETGISPDIERLKRNINATPYQREEEEEDREEQEESVEG. The segment covering 8 to 20 has biased composition (basic and acidic residues); sequence PDRDRQIEEHELQ. Phosphoserine is present on serine 25. A compositionally biased stretch (acidic residues) spans 43–56; it reads EEEEEDREEQEESV. 7 helical membrane passes run 72 to 92, 96 to 116, 144 to 164, 184 to 204, 245 to 265, 304 to 324, and 349 to 369; these read LTIR…FIVM, LTTG…FFFV, CVVA…LFAM, LGWM…SVVP, VLGK…FFTA, IINI…WPLI, and VFIA…KVLI. The segment at 386-407 is disordered; that stretch reads RSSLAHKEDPPASPASPLTPRI. Helical transmembrane passes span 423-443, 455-475, 478-497, 501-520, 541-561, 603-623, 641-661, and 679-699; these read IPSW…TAIL, IIVI…GAGL, WSLA…AWAG, GGLL…VSTA, FVSQ…VFWL, LMLC…KDCL, FFLG…LFVW, and GLIC…IAGV.

Belongs to the YSL (TC 2.A.67.2) family.

The protein resides in the membrane. Its function is as follows. May be involved in the transport of nicotianamine-chelated metals. The polypeptide is Probable metal-nicotianamine transporter YSL8 (YSL8) (Arabidopsis thaliana (Mouse-ear cress)).